Here is a 188-residue protein sequence, read N- to C-terminus: dCTP deaminase (188 aa).

DCTP-binding positions include 111-116 (KSTYAR), 135-137 (TLE), Gln156, Tyr170, and Gln180. Catalysis depends on Glu137, which acts as the Proton donor/acceptor.

This sequence belongs to the dCTP deaminase family. In terms of assembly, homotrimer.

The enzyme catalyses dCTP + H2O + H(+) = dUTP + NH4(+). Its pathway is pyrimidine metabolism; dUMP biosynthesis; dUMP from dCTP (dUTP route): step 1/2. Functionally, catalyzes the deamination of dCTP to dUTP. In Nitrosomonas europaea (strain ATCC 19718 / CIP 103999 / KCTC 2705 / NBRC 14298), this protein is dCTP deaminase.